The following is a 367-amino-acid chain: Histidinol-phosphate aminotransferase (367 aa).

Lysine 225 is subject to N6-(pyridoxal phosphate)lysine.

Belongs to the class-II pyridoxal-phosphate-dependent aminotransferase family. Histidinol-phosphate aminotransferase subfamily. Homodimer. It depends on pyridoxal 5'-phosphate as a cofactor.

The enzyme catalyses L-histidinol phosphate + 2-oxoglutarate = 3-(imidazol-4-yl)-2-oxopropyl phosphate + L-glutamate. Its pathway is amino-acid biosynthesis; L-histidine biosynthesis; L-histidine from 5-phospho-alpha-D-ribose 1-diphosphate: step 7/9. The chain is Histidinol-phosphate aminotransferase from Hyphomonas neptunium (strain ATCC 15444).